A 363-amino-acid polypeptide reads, in one-letter code: Transcription factor IIIA (363 aa).

9 consecutive C2H2-type zinc fingers follow at residues 38–62 (FICS…LCKH), 68–92 (FVCD…ILIH), 98–123 (FVCA…ERKH), 130–154 (YVCN…QCQH), 160–184 (FRCT…GKVH), 187–211 (YLCQ…REAH), 215–237 (VTCT…MKTH), 244–269 (YRCP…LSFH), and 275–299 (FVCE…SVVH). A disordered region spans residues 301–363 (PDKKRMKLKV…LAPAALLTVH (63 aa)). Positions 338-350 (SLPNSTESSSSPE) are enriched in low complexity.

The protein localises to the nucleus. Its function is as follows. Involved in ribosomal large subunit biogenesis. Binds the approximately 50 base pairs internal control region (ICR) of 5S ribosomal RNA genes. It is required for their RNA polymerase III-dependent transcription and may also maintain the transcription of other genes. Also binds the transcribed 5S RNA's. This Rattus norvegicus (Rat) protein is Transcription factor IIIA (Gtf3a).